Here is a 282-residue protein sequence, read N- to C-terminus: V-set domain-containing T-cell activation inhibitor 1 (282 aa).

The N-terminal stretch at 1-24 (MASLGQIIFWSIINVIIILAGAIV) is a signal peptide. Ig-like V-type domains are found at residues 35-144 (HFIT…ANLE) and 153-241 (PEIN…IKVT). 2 disulfide bridges follow: C56-C130 and C168-C225. N216 is a glycosylation site (N-linked (GlcNAc...) asparagine). A lipid anchor (GPI-anchor amidated glycine) is attached at G257. Positions 258-282 (PSPCVSSVSAAGWALLSLSCCLMLR) are cleaved as a propeptide — removed in mature form.

It belongs to the immunoglobulin superfamily. BTN/MOG family. Post-translationally, N-glycosylated.

The protein localises to the cell membrane. Negatively regulates T-cell-mediated immune response by inhibiting T-cell activation, proliferation, cytokine production and development of cytotoxicity. When expressed on the cell surface of tumor macrophages, plays an important role, together with regulatory T-cells (Treg), in the suppression of tumor-associated antigen-specific T-cell immunity. Involved in promoting epithelial cell transformation. This chain is V-set domain-containing T-cell activation inhibitor 1, found in Rattus norvegicus (Rat).